Reading from the N-terminus, the 436-residue chain is 3-ketoacyl-CoA thiolase (436 aa).

The active-site Acyl-thioester intermediate is cysteine 99. Residues histidine 392 and cysteine 422 each act as proton acceptor in the active site.

This sequence belongs to the thiolase-like superfamily. Thiolase family. Heterotetramer of two alpha chains (FadJ) and two beta chains (FadI).

It localises to the cytoplasm. It carries out the reaction an acyl-CoA + acetyl-CoA = a 3-oxoacyl-CoA + CoA. The protein operates within lipid metabolism; fatty acid beta-oxidation. In terms of biological role, catalyzes the final step of fatty acid oxidation in which acetyl-CoA is released and the CoA ester of a fatty acid two carbons shorter is formed. The chain is 3-ketoacyl-CoA thiolase from Shewanella amazonensis (strain ATCC BAA-1098 / SB2B).